Consider the following 644-residue polypeptide: 1-deoxy-D-xylulose-5-phosphate synthase (644 aa).

Residues His78 and 120–122 (GHA) each bind thiamine diphosphate. Asp149 serves as a coordination point for Mg(2+). Thiamine diphosphate contacts are provided by residues 150–151 (AA), Asn178, and Glu373. Asn178 serves as a coordination point for Mg(2+).

The protein belongs to the transketolase family. DXPS subfamily. In terms of assembly, homodimer. Requires Mg(2+) as cofactor. Thiamine diphosphate serves as cofactor.

It catalyses the reaction D-glyceraldehyde 3-phosphate + pyruvate + H(+) = 1-deoxy-D-xylulose 5-phosphate + CO2. It functions in the pathway metabolic intermediate biosynthesis; 1-deoxy-D-xylulose 5-phosphate biosynthesis; 1-deoxy-D-xylulose 5-phosphate from D-glyceraldehyde 3-phosphate and pyruvate: step 1/1. Functionally, catalyzes the acyloin condensation reaction between C atoms 2 and 3 of pyruvate and glyceraldehyde 3-phosphate to yield 1-deoxy-D-xylulose-5-phosphate (DXP). This chain is 1-deoxy-D-xylulose-5-phosphate synthase, found in Chlamydia abortus (strain DSM 27085 / S26/3) (Chlamydophila abortus).